The following is an 817-amino-acid chain: Leucine--tRNA ligase (817 aa).

The 'HIGH' region signature appears at 40–50 (PYPSGKLHMGH). Residues 578 to 582 (KMSKS) carry the 'KMSKS' region motif. ATP is bound at residue Lys581.

This sequence belongs to the class-I aminoacyl-tRNA synthetase family.

The protein localises to the cytoplasm. It carries out the reaction tRNA(Leu) + L-leucine + ATP = L-leucyl-tRNA(Leu) + AMP + diphosphate. The protein is Leucine--tRNA ligase of Caldicellulosiruptor saccharolyticus (strain ATCC 43494 / DSM 8903 / Tp8T 6331).